Here is a 301-residue protein sequence, read N- to C-terminus: Structure-specific endonuclease subunit SLX1 (301 aa).

The GIY-YIG domain maps to 12 to 95; that stretch reads AFYCCYLLRS…QHPYQTRFIK (84 aa). Residues 216–283 form an SLX1-type zinc finger; it reads CAICEKIVDY…IPTSGQCPNC (68 aa).

This sequence belongs to the SLX1 family. As to quaternary structure, forms a heterodimer with SLX4. Requires a divalent metal cation as cofactor.

The protein resides in the nucleus. Catalytic subunit of the SLX1-SLX4 structure-specific endonuclease that resolves DNA secondary structures generated during DNA repair and recombination. Has endonuclease activity towards branched DNA substrates, introducing single-strand cuts in duplex DNA close to junctions with ss-DNA. The sequence is that of Structure-specific endonuclease subunit SLX1 from Eremothecium gossypii (strain ATCC 10895 / CBS 109.51 / FGSC 9923 / NRRL Y-1056) (Yeast).